Reading from the N-terminus, the 97-residue chain is Co-chaperonin GroES (97 aa).

It belongs to the GroES chaperonin family. In terms of assembly, heptamer of 7 subunits arranged in a ring. Interacts with the chaperonin GroEL.

It is found in the cytoplasm. Functionally, together with the chaperonin GroEL, plays an essential role in assisting protein folding. The GroEL-GroES system forms a nano-cage that allows encapsulation of the non-native substrate proteins and provides a physical environment optimized to promote and accelerate protein folding. GroES binds to the apical surface of the GroEL ring, thereby capping the opening of the GroEL channel. The protein is Co-chaperonin GroES of Buchnera aphidicola subsp. Tetraneura caerulescens.